Consider the following 117-residue polypeptide: Protein OPG035 (117 aa).

This sequence belongs to the poxviridae OPG035 family.

Bcl-2-like protein which contributes to virulence by preventing host NF-kappa-B activation in response to pro-inflammatory stimuli such as TNF-alpha or IL1B. The sequence is that of Protein OPG035 (OPG035) from Bos taurus (Bovine).